Reading from the N-terminus, the 200-residue chain is ATP-dependent Clp protease proteolytic subunit (200 aa).

Ser97 acts as the Nucleophile in catalysis. The active site involves His122.

This sequence belongs to the peptidase S14 family. As to quaternary structure, fourteen ClpP subunits assemble into 2 heptameric rings which stack back to back to give a disk-like structure with a central cavity, resembling the structure of eukaryotic proteasomes.

It is found in the cytoplasm. It carries out the reaction Hydrolysis of proteins to small peptides in the presence of ATP and magnesium. alpha-casein is the usual test substrate. In the absence of ATP, only oligopeptides shorter than five residues are hydrolyzed (such as succinyl-Leu-Tyr-|-NHMec, and Leu-Tyr-Leu-|-Tyr-Trp, in which cleavage of the -Tyr-|-Leu- and -Tyr-|-Trp bonds also occurs).. Cleaves peptides in various proteins in a process that requires ATP hydrolysis. Has a chymotrypsin-like activity. Plays a major role in the degradation of misfolded proteins. This Oleidesulfovibrio alaskensis (strain ATCC BAA-1058 / DSM 17464 / G20) (Desulfovibrio alaskensis) protein is ATP-dependent Clp protease proteolytic subunit.